The primary structure comprises 743 residues: Protein STB5 (743 aa).

The segment at residues 22–49 (CARCRKLKKKCGKQIPTCANCDKNGAHC) is a DNA-binding region (zn(2)-C6 fungal-type). Disordered stretches follow at residues 81–100 (VGKSPLSTKSMPNSSSPLSA) and 155–249 (NSNP…YANN). Composition is skewed to polar residues over residues 85–99 (PLSTKSMPNSSSPLS) and 155–198 (NSNP…SPLI). Low complexity predominate over residues 213-238 (NNNRNTSNGDNGSNVNHDNNNGSTNT). Positions 239-249 (PQLSLTPYANN) are enriched in polar residues.

The protein localises to the nucleus. In terms of biological role, binds to SIN3. This chain is Protein STB5 (STB5), found in Saccharomyces cerevisiae (strain ATCC 204508 / S288c) (Baker's yeast).